The sequence spans 288 residues: CUF1-dependent copper transporter 1 (288 aa).

The N-linked (GlcNAc...) asparagine glycan is linked to Asn-18. Residues 42–62 (MPSSAGATVGVCIGLFILAIF) form a helical membrane-spanning segment. 2 disordered regions span residues 106 to 125 (PVLFNRRSSTKKEKDVYNPL) and 154 to 180 (RESQEGSSAPSYAHSQQGQAQAQGSGV). The span at 158-167 (EGSSAPSYAH) shows a compositional bias: polar residues. Residues 168–177 (SQQGQAQAQG) show a composition bias toward low complexity. A helical membrane pass occupies residues 251–271 (LLMLVVMTFNIWWMISVVIGC).

Belongs to the copper transporter (Ctr) (TC 1.A.56) family. SLC31A subfamily. In terms of assembly, interacts with the copper acquisition factor BIM1.

It localises to the cell membrane. In terms of biological role, high affinity copper transporter involved in Cu(+) import into the cell upon copper-limitating conditions. Functions with BIM1 and probably also FRE4 and FRE7, where FRE4 and FRE7 metalloreductases liberate the Cu(2+) bound to the BIM1 copper-binding site for subsequent import of Cu(+) into the cell by CTR1, via the reduction of BIM1-bound Cu(2+) to Cu(+) to reduce binding affinity for BIM1 but increase affinity for CTR1. The BIM1-CTR1 pathway for copper uptake plays a key role in colonization in the brain where copper amounts are low and thus in cryptococcal meningitis. In Cryptococcus neoformans var. grubii serotype A (strain H99 / ATCC 208821 / CBS 10515 / FGSC 9487) (Filobasidiella neoformans var. grubii), this protein is CUF1-dependent copper transporter 1.